The following is a 361-amino-acid chain: sn-glycerol-3-phosphate import ATP-binding protein UgpC (361 aa).

The ABC transporter domain occupies 4–235 (VTLRNVRKTY…PATTFVASFI (232 aa)). 37 to 44 (GPSGCGKS) is an ATP binding site.

It belongs to the ABC transporter superfamily. sn-glycerol-3-phosphate importer (TC 3.A.1.1.3) family. In terms of assembly, the complex is composed of two ATP-binding proteins (UgpC), two transmembrane proteins (UgpA and UgpE) and a solute-binding protein (UgpB).

The protein resides in the cell inner membrane. The enzyme catalyses sn-glycerol 3-phosphate(out) + ATP + H2O = sn-glycerol 3-phosphate(in) + ADP + phosphate + H(+). In terms of biological role, part of the ABC transporter complex UgpBAEC involved in sn-glycerol-3-phosphate (G3P) import. Responsible for energy coupling to the transport system. This Rhodopseudomonas palustris (strain BisA53) protein is sn-glycerol-3-phosphate import ATP-binding protein UgpC.